Reading from the N-terminus, the 29-residue chain is MHVSTFQALMLMLAFGSFIIALLTYIKKK.

A helical transmembrane segment spans residues 6–26 (FQALMLMLAFGSFIIALLTYI).

The protein localises to the cell membrane. In terms of biological role, possible toxic component of a type I toxin-antitoxin (TA) system; an overlapping antisense RNA has been identified. This Bacillus subtilis (strain 168) protein is Probable small toxic protein BsrH.